An 89-amino-acid polypeptide reads, in one-letter code: Putative sodium channel toxin Ts30 (89 aa).

The first 17 residues, 1-17, serve as a signal peptide directing secretion; sequence MFKLAIILALLFFGARA. Positions 21–85 constitute an LCN-type CS-alpha/beta domain; it reads RDGYPILSDG…FGDSGTPECH (65 aa). 4 disulfides stabilise this stretch: C31-C84, C35-C59, C44-C64, and C48-C66.

In terms of tissue distribution, expressed by the venom gland.

The protein resides in the secreted. The sequence is that of Putative sodium channel toxin Ts30 from Tityus serrulatus (Brazilian scorpion).